The chain runs to 688 residues: Polyphosphate kinase (688 aa).

N45 contacts ATP. Residues R375 and R405 each contribute to the Mg(2+) site. A PLD phosphodiesterase domain is found at 430–464; sequence PGLKIHAKLFLISRKEGDDVVRYAHIGTGNFNEKT. The active-site Phosphohistidine intermediate is the H435. ATP contacts are provided by Y468, R564, and H592.

The protein belongs to the polyphosphate kinase 1 (PPK1) family. Mg(2+) is required as a cofactor. Post-translationally, an intermediate of this reaction is the autophosphorylated ppk in which a phosphate is covalently linked to a histidine residue through a N-P bond.

The catalysed reaction is [phosphate](n) + ATP = [phosphate](n+1) + ADP. In terms of biological role, catalyzes the reversible transfer of the terminal phosphate of ATP to form a long-chain polyphosphate (polyP). In Salmonella typhimurium (strain LT2 / SGSC1412 / ATCC 700720), this protein is Polyphosphate kinase.